Consider the following 104-residue polypeptide: Integration host factor subunit beta (104 aa).

The protein belongs to the bacterial histone-like protein family. As to quaternary structure, heterodimer of an alpha and a beta chain.

Functionally, this protein is one of the two subunits of integration host factor, a specific DNA-binding protein that functions in genetic recombination as well as in transcriptional and translational control. This chain is Integration host factor subunit beta (ihfB), found in Xylella fastidiosa (strain 9a5c).